A 110-amino-acid chain; its full sequence is Large ribosomal subunit protein uL22 (110 aa).

This sequence belongs to the universal ribosomal protein uL22 family. As to quaternary structure, part of the 50S ribosomal subunit.

Its function is as follows. This protein binds specifically to 23S rRNA; its binding is stimulated by other ribosomal proteins, e.g. L4, L17, and L20. It is important during the early stages of 50S assembly. It makes multiple contacts with different domains of the 23S rRNA in the assembled 50S subunit and ribosome. In terms of biological role, the globular domain of the protein is located near the polypeptide exit tunnel on the outside of the subunit, while an extended beta-hairpin is found that lines the wall of the exit tunnel in the center of the 70S ribosome. The protein is Large ribosomal subunit protein uL22 of Oleidesulfovibrio alaskensis (strain ATCC BAA-1058 / DSM 17464 / G20) (Desulfovibrio alaskensis).